Consider the following 793-residue polypeptide: Probable phosphoketolase (793 aa).

It belongs to the XFP family. Thiamine diphosphate serves as cofactor.

This chain is Probable phosphoketolase, found in Rhodopirellula baltica (strain DSM 10527 / NCIMB 13988 / SH1).